We begin with the raw amino-acid sequence, 927 residues long: Protein LONGIFOLIA 1 (927 aa).

Disordered stretches follow at residues T41–R198, Y210–R257, A460–N588, and Y605–M626. The segment covering S86–S114 has biased composition (low complexity). Residues Q115 to E125 show a composition bias toward polar residues. The span at D146–E165 shows a compositional bias: basic and acidic residues. The segment covering K182–W193 has biased composition (polar residues). The span at Y210 to P226 shows a compositional bias: basic and acidic residues. The span at S232–S245 shows a compositional bias: low complexity. Composition is skewed to polar residues over residues Q483 to S500 and N538 to A553. 2 stretches are compositionally biased toward basic and acidic residues: residues S569–R584 and Y605–T616.

Interacts (via C-terminus) with TON1A and TON1B. Expressed in roots, petioles, leaf blades and floral organs.

It is found in the nucleus. Its function is as follows. In association with LNG2, regulates leaf morphology by promoting longitudinal polar cell elongation independently of ROT3. The chain is Protein LONGIFOLIA 1 (LNG1) from Arabidopsis thaliana (Mouse-ear cress).